The primary structure comprises 434 residues: ATP-dependent protease ATPase subunit HslU (434 aa).

Residues Ile18, 60–65 (GVGKTE), Asp247, Glu312, and Arg384 each bind ATP.

It belongs to the ClpX chaperone family. HslU subfamily. In terms of assembly, a double ring-shaped homohexamer of HslV is capped on each side by a ring-shaped HslU homohexamer. The assembly of the HslU/HslV complex is dependent on binding of ATP.

The protein localises to the cytoplasm. In terms of biological role, ATPase subunit of a proteasome-like degradation complex; this subunit has chaperone activity. The binding of ATP and its subsequent hydrolysis by HslU are essential for unfolding of protein substrates subsequently hydrolyzed by HslV. HslU recognizes the N-terminal part of its protein substrates and unfolds these before they are guided to HslV for hydrolysis. This chain is ATP-dependent protease ATPase subunit HslU, found in Brucella ovis (strain ATCC 25840 / 63/290 / NCTC 10512).